Consider the following 375-residue polypeptide: 23S rRNA (uracil(747)-C(5))-methyltransferase RlmC (375 aa).

[4Fe-4S] cluster contacts are provided by C3, C11, C14, and C87. Residues Q212, F241, E262, and N307 each coordinate S-adenosyl-L-methionine. Catalysis depends on C334, which acts as the Nucleophile.

The protein belongs to the class I-like SAM-binding methyltransferase superfamily. RNA M5U methyltransferase family. RlmC subfamily.

The enzyme catalyses uridine(747) in 23S rRNA + S-adenosyl-L-methionine = 5-methyluridine(747) in 23S rRNA + S-adenosyl-L-homocysteine + H(+). Catalyzes the formation of 5-methyl-uridine at position 747 (m5U747) in 23S rRNA. This Shigella dysenteriae serotype 1 (strain Sd197) protein is 23S rRNA (uracil(747)-C(5))-methyltransferase RlmC.